The sequence spans 111 residues: Large ribosomal subunit protein uL23 (111 aa).

This sequence belongs to the universal ribosomal protein uL23 family. Part of the 50S ribosomal subunit. Contacts protein L29, and trigger factor when it is bound to the ribosome.

In terms of biological role, one of the early assembly proteins it binds 23S rRNA. One of the proteins that surrounds the polypeptide exit tunnel on the outside of the ribosome. Forms the main docking site for trigger factor binding to the ribosome. The sequence is that of Large ribosomal subunit protein uL23 from Nitrosomonas eutropha (strain DSM 101675 / C91 / Nm57).